The primary structure comprises 505 residues: Beta-glucosidase 3 (505 aa).

Residues 1–22 (MAAAAAFFCALLFISVQHGVLG) form the signal peptide. 2 residues coordinate a beta-D-glucoside: glutamine 43 and histidine 143. Glutamate 189 serves as the catalytic Proton donor. Cysteine 208 and cysteine 217 form a disulfide bridge. N-linked (GlcNAc...) asparagine glycosylation is present at asparagine 221. Residues tyrosine 333 and glutamate 405 each contribute to the a beta-D-glucoside site. Glutamate 405 acts as the Nucleophile in catalysis. N-linked (GlcNAc...) asparagine glycans are attached at residues asparagine 415 and asparagine 436. Tryptophan 450 and tyrosine 466 together coordinate a beta-D-glucoside.

The protein belongs to the glycosyl hydrolase 1 family.

It carries out the reaction Hydrolysis of terminal, non-reducing beta-D-glucosyl residues with release of beta-D-glucose.. The protein is Beta-glucosidase 3 (BGLU3) of Oryza sativa subsp. japonica (Rice).